The following is a 192-amino-acid chain: Peptide deformylase (192 aa).

The Fe cation site is built by cysteine 102 and histidine 145. Residue glutamate 146 is part of the active site. Histidine 149 lines the Fe cation pocket.

It belongs to the polypeptide deformylase family. Fe(2+) serves as cofactor.

It catalyses the reaction N-terminal N-formyl-L-methionyl-[peptide] + H2O = N-terminal L-methionyl-[peptide] + formate. In terms of biological role, removes the formyl group from the N-terminal Met of newly synthesized proteins. Requires at least a dipeptide for an efficient rate of reaction. N-terminal L-methionine is a prerequisite for activity but the enzyme has broad specificity at other positions. The sequence is that of Peptide deformylase from Thermus thermophilus (strain ATCC BAA-163 / DSM 7039 / HB27).